The chain runs to 337 residues: Anaerobic sulfite reductase subunit C (337 aa).

Residues Cys-115, Cys-121, Cys-153, Cys-157, Cys-180, Cys-183, Cys-186, Cys-190, Cys-212, Cys-215, Cys-218, and Cys-222 each contribute to the [4Fe-4S] cluster site. Residue Cys-157 participates in siroheme binding. 4Fe-4S ferredoxin-type domains are found at residues Ala-171 to Leu-200 and Gly-203 to Asp-232.

Belongs to the nitrite and sulfite reductase 4Fe-4S domain family. As to quaternary structure, the anaerobic sulfite reductase seems to consist of three subunits. [4Fe-4S] cluster is required as a cofactor. Requires siroheme as cofactor.

It localises to the cytoplasm. The enzyme catalyses hydrogen sulfide + 3 NAD(+) + 3 H2O = sulfite + 3 NADH + 4 H(+). Its pathway is sulfur metabolism; sulfite reduction. This enzyme catalyzes the hydrogen sulfide production from sulfite. It is strictly anaerobic. It is regulated by electron acceptors rather than by cysteine. The polypeptide is Anaerobic sulfite reductase subunit C (asrC) (Salmonella typhi).